The following is a 147-amino-acid chain: Large ribosomal subunit protein uL13 (147 aa).

Belongs to the universal ribosomal protein uL13 family. Part of the 50S ribosomal subunit.

In terms of biological role, this protein is one of the early assembly proteins of the 50S ribosomal subunit, although it is not seen to bind rRNA by itself. It is important during the early stages of 50S assembly. The chain is Large ribosomal subunit protein uL13 from Corynebacterium glutamicum (strain R).